Consider the following 99-residue polypeptide: Co-chaperonin GroES (99 aa).

Belongs to the GroES chaperonin family. Heptamer of 7 subunits arranged in a ring. Interacts with the chaperonin GroEL.

Its subcellular location is the cytoplasm. Together with the chaperonin GroEL, plays an essential role in assisting protein folding. The GroEL-GroES system forms a nano-cage that allows encapsulation of the non-native substrate proteins and provides a physical environment optimized to promote and accelerate protein folding. GroES binds to the apical surface of the GroEL ring, thereby capping the opening of the GroEL channel. This chain is Co-chaperonin GroES, found in Corynebacterium kroppenstedtii (strain DSM 44385 / JCM 11950 / CIP 105744 / CCUG 35717).